The sequence spans 179 residues: Large ribosomal subunit protein uL6c (179 aa).

Belongs to the universal ribosomal protein uL6 family. In terms of assembly, part of the 50S ribosomal subunit.

It localises to the plastid. It is found in the chloroplast. Functionally, binds 23S rRNA. In Trieres chinensis (Marine centric diatom), this protein is Large ribosomal subunit protein uL6c (rpl6).